Here is a 97-residue protein sequence, read N- to C-terminus: ESAT-6-like protein EsxS (97 aa).

The protein belongs to the WXG100 family. CFP-10 subfamily. Forms a tight complex with EsxR. Exists in heterodimeric and heterotetrameric forms.

It localises to the secreted. In Mycobacterium tuberculosis (strain ATCC 25618 / H37Rv), this protein is ESAT-6-like protein EsxS.